A 163-amino-acid chain; its full sequence is Probable protein tyrosine phosphatase type IVA B (163 aa).

One can recognise a Tyrosine-protein phosphatase domain in the interval T10–K161. A disulfide bridge connects residues C49 and C104. D70 functions as the Proton donor in the catalytic mechanism. The Phosphocysteine intermediate role is filled by C104. A phosphate-binding site is contributed by I105–R110. R110 is a binding site for substrate. A Cysteine methyl ester modification is found at C160. The S-farnesyl cysteine moiety is linked to residue C160. Residues K161–M163 constitute a propeptide, removed in mature form.

Belongs to the protein-tyrosine phosphatase family.

The protein localises to the membrane. It catalyses the reaction O-phospho-L-tyrosyl-[protein] + H2O = L-tyrosyl-[protein] + phosphate. The chain is Probable protein tyrosine phosphatase type IVA B from Dictyostelium discoideum (Social amoeba).